The sequence spans 514 residues: Probable cytochrome P450 6w1 (514 aa).

Position 450 (C450) interacts with heme.

This sequence belongs to the cytochrome P450 family. The cofactor is heme.

The protein resides in the endoplasmic reticulum membrane. The protein localises to the microsome membrane. May be involved in the metabolism of insect hormones and in the breakdown of synthetic insecticides. The sequence is that of Probable cytochrome P450 6w1 (Cyp6w1) from Drosophila melanogaster (Fruit fly).